The sequence spans 226 residues: ATP-dependent dethiobiotin synthetase BioD (226 aa).

Position 14–19 (14–19) interacts with ATP; the sequence is GIGKTF. Thr-18 lines the Mg(2+) pocket. Lys-39 is an active-site residue. Ser-43 serves as a coordination point for substrate. ATP is bound by residues Asp-56, 117-120, 177-178, 206-208, and Asn-213; these read EGVG, NT, and PHI. Residues Asp-56 and Glu-117 each coordinate Mg(2+).

It belongs to the dethiobiotin synthetase family. In terms of assembly, homodimer. Mg(2+) is required as a cofactor.

The protein localises to the cytoplasm. The catalysed reaction is (7R,8S)-7,8-diammoniononanoate + CO2 + ATP = (4R,5S)-dethiobiotin + ADP + phosphate + 3 H(+). The protein operates within cofactor biosynthesis; biotin biosynthesis; biotin from 7,8-diaminononanoate: step 1/2. Catalyzes a mechanistically unusual reaction, the ATP-dependent insertion of CO2 between the N7 and N8 nitrogen atoms of 7,8-diaminopelargonic acid (DAPA, also called 7,8-diammoniononanoate) to form a ureido ring. The sequence is that of ATP-dependent dethiobiotin synthetase BioD from Xylella fastidiosa (strain 9a5c).